Here is a 418-residue protein sequence, read N- to C-terminus: Serine/threonine transporter SstT (418 aa).

Helical transmembrane passes span 21–41, 49–69, 83–103, 142–162, 190–210, 217–237, 299–319, and 331–351; these read ILIG…AAIA, FVGA…IASI, ILFL…VVSF, ALLN…GIAL, FAPL…GFGA, LLVV…PLIV, MAGA…TLGI, and VVAA…LLLI.

It belongs to the dicarboxylate/amino acid:cation symporter (DAACS) (TC 2.A.23) family.

It is found in the cell inner membrane. The enzyme catalyses L-serine(in) + Na(+)(in) = L-serine(out) + Na(+)(out). The catalysed reaction is L-threonine(in) + Na(+)(in) = L-threonine(out) + Na(+)(out). Involved in the import of serine and threonine into the cell, with the concomitant import of sodium (symport system). The chain is Serine/threonine transporter SstT from Yersinia pseudotuberculosis serotype O:1b (strain IP 31758).